A 920-amino-acid polypeptide reads, in one-letter code: Urea transporter 2 (920 aa).

Residues 25 to 57 (FTSPSWPSTSPDTHPALPLLEMPEEKDLRSSNE) are disordered. Residues 26–39 (TSPSWPSTSPDTHP) show a composition bias toward low complexity. Over residues 47–57 (PEEKDLRSSNE) the composition is skewed to basic and acidic residues. Helical transmembrane passes span 151–170 (WWTITGGLGTVVSTLTALAL), 176–196 (AIASGLHGYNGMLVGLLMAVF), 204–224 (WWLLFPVTFTAMSCPVLSSAL), 233–253 (LPVFTLPFNIAVTLYLAATGH), 272–291 (ITWTEMEMPLLLQAIPVGVG), 302–322 (GGVFLVALFISSPLICLHAAI), 346–366 (WSYNCVLSCIAIGGMFYALTW), 370–390 (LLALICALFCAYMEAAISNIM), and 392–412 (VVGVPPGTWAFCLATIIFLLL). Residues 446–467 (EKAPSGGGGEHPPTAGPKVEEG) are disordered. At S477 the chain carries Phosphoserine. 4 helical membrane-spanning segments follow: residues 600–620 (GILIILGLFIQNPWWAISGCL), 638–658 (AIAAGFHGYNGVLVGLLMAVF), 666–686 (WWLLLPVIIMSMSCPILSSAL), and 695–715 (LPVFTLPFNITVTLYLAATGH). Residue N733 is glycosylated (N-linked (GlcNAc...) asparagine). The next 4 membrane-spanning stretches (helical) occupy residues 764 to 784 (GGIFLIALFISSPLICLHAAI), 803 to 823 (IYFGLCGFNSTLACIAIGGMF), 832 to 852 (LLAIACALFAAYLGAALANML), and 854 to 874 (VFGLPPCTWPFCLSALTFLLL).

It belongs to the urea transporter family. In terms of assembly, interacts with SNAPIN which enhances its urea transport activity. Epressed in the inner medulla of the kidney (at protein level). As to expression, expressed in the kidney.

Its subcellular location is the apical cell membrane. It is found in the cell membrane. The enzyme catalyses urea(in) = urea(out). With respect to regulation, inhibited by phloretin. Its function is as follows. Mediates the transport of urea driven by a concentration gradient across the cell membrane of the renal inner medullary collecting duct which is critical to the urinary concentrating mechanism. In terms of biological role, mediates the transport of urea driven by a concentration gradient across the cell membrane of the kidney inner medullary collecting duct which is critical to the urinary concentrating mechanism. This chain is Urea transporter 2 (SLC14A2), found in Homo sapiens (Human).